A 431-amino-acid polypeptide reads, in one-letter code: Enolase (431 aa).

Q166 is a (2R)-2-phosphoglycerate binding site. Catalysis depends on E208, which acts as the Proton donor. 3 residues coordinate Mg(2+): D245, E288, and D315. Residues K340, R369, S370, and K391 each coordinate (2R)-2-phosphoglycerate. K340 serves as the catalytic Proton acceptor.

This sequence belongs to the enolase family. It depends on Mg(2+) as a cofactor.

Its subcellular location is the cytoplasm. It is found in the secreted. The protein localises to the cell surface. It carries out the reaction (2R)-2-phosphoglycerate = phosphoenolpyruvate + H2O. The protein operates within carbohydrate degradation; glycolysis; pyruvate from D-glyceraldehyde 3-phosphate: step 4/5. Catalyzes the reversible conversion of 2-phosphoglycerate (2-PG) into phosphoenolpyruvate (PEP). It is essential for the degradation of carbohydrates via glycolysis. This chain is Enolase, found in Clostridium tetani (strain Massachusetts / E88).